The sequence spans 100 residues: Large ribosomal subunit protein uL23 (100 aa).

The protein belongs to the universal ribosomal protein uL23 family. In terms of assembly, part of the 50S ribosomal subunit. Contacts protein L29, and trigger factor when it is bound to the ribosome.

Functionally, one of the early assembly proteins it binds 23S rRNA. One of the proteins that surrounds the polypeptide exit tunnel on the outside of the ribosome. Forms the main docking site for trigger factor binding to the ribosome. The chain is Large ribosomal subunit protein uL23 from Synechococcus sp. (strain CC9605).